Consider the following 396-residue polypeptide: E3 ubiquitin-protein transferase MAEA (396 aa).

The interval 1-124 is extracellular and involved in cell to cell contact; that stretch reads MAVQESAAQL…AAASMWKRKR (124 aa). Thr-28 carries the phosphothreonine modification. Residues 121-153 form the LisH domain; sequence KRKRMDRMMVEHLLRCGYYNTAVKLARQSGIED. One can recognise a CTLH domain in the interval 159-216; it reads MFLTAKEVEESLERRETATCLAWCHDNKSRLRKMKSCLEFSLRIQEFIELVRQNKRLD. Residues 314–381 form an RING-Gid-type zinc finger; sequence CPVCSRSLNK…QDDKVVCPRT (68 aa).

As to quaternary structure, identified in the CTLH complex that contains GID4, RANBP9 and/or RANBP10, MKLN1, MAEA, RMND5A (or alternatively its paralog RMND5B), GID8, ARMC8, WDR26 and YPEL5. Within this complex, MAEA, RMND5A (or alternatively its paralog RMND5B), GID8, WDR26, and RANBP9 and/or RANBP10 form the catalytic core, while GID4, MKLN1, ARMC8 and YPEL5 have ancillary roles. Interacts with F-actin. Autoubiquitinated as component of the CTLH E3 ubiquitin-protein ligase complex (in vitro). Detected in embryonic fibroblasts. Detected in macrophages. Detected in heart. liver, spleen and kidney (at protein level).

Its subcellular location is the cytoplasm. It localises to the nucleus. The protein resides in the nucleoplasm. It is found in the nucleus matrix. The protein localises to the cell membrane. Its subcellular location is the cytoskeleton. The catalysed reaction is S-ubiquitinyl-[E2 ubiquitin-conjugating enzyme]-L-cysteine + [acceptor protein]-L-lysine = [E2 ubiquitin-conjugating enzyme]-L-cysteine + N(6)-ubiquitinyl-[acceptor protein]-L-lysine.. Its function is as follows. Core component of the CTLH E3 ubiquitin-protein ligase complex that selectively accepts ubiquitin from UBE2H and mediates ubiquitination and subsequent proteasomal degradation of the transcription factor HBP1. MAEA and RMND5A are both required for catalytic activity of the CTLH E3 ubiquitin-protein ligase complex. MAEA is required for normal cell proliferation. The CTLH E3 ubiquitin-protein ligase complex is not required for the degradation of enzymes involved in gluconeogenesis, such as FBP1. Plays a role in erythroblast enucleation during erythrocyte maturation and in the development of mature macrophages. Mediates the attachment of erythroid cell to mature macrophages; this MAEA-mediated contact inhibits erythroid cell apoptosis. Participates in erythroblastic island formation, which is the functional unit of definitive erythropoiesis. Associates with F-actin to regulate actin distribution in erythroblasts and macrophages. May contribute to nuclear architecture and cells division events. The sequence is that of E3 ubiquitin-protein transferase MAEA (Maea) from Mus musculus (Mouse).